Here is a 290-residue protein sequence, read N- to C-terminus: MGRQKELVTRCGEMLHIRYRLLRQALAECLGTLILVMFGCGSVAQVVLSRGTHGGFLTINLAFGFAVTLGILVAGQVSGAHLNPAVTFAMCFLAREPWIKLPVYTLAQTLGAFLGAGIIFGLYYDAIWAFANNQLIVSGPNGTAGIFATYPSGHLDMVNGFFDQFIGTASLIVCVLAIVDPNNNPVPRGLEAFTVGLVVLVIGTSMGFNSGYAVNPARDFGPRLFTAIAGWGSEVFTTGRHWWWVPIASPLLGSIAGVFVYQLMIGCHLEPPPPSTDEENVKLSQVKHKE.

The Cytoplasmic segment spans residues 1 to 24 (MGRQKELVTRCGEMLHIRYRLLRQ). Residues 25 to 42 (ALAECLGTLILVMFGCGS) form a helical membrane-spanning segment. At 43–56 (VAQVVLSRGTHGGF) the chain is on the extracellular side. The helical transmembrane segment at 57-74 (LTINLAFGFAVTLGILVA) threads the bilayer. Residues 75–78 (GQVS) are Cytoplasmic-facing. The discontinuously helical intramembrane region spans 79–92 (GAHLNPAVTFAMCF). The NPA 1 motif lies at 83–85 (NPA). Topologically, residues 93–100 (LAREPWIK) are cytoplasmic. A helical membrane pass occupies residues 101 to 121 (LPVYTLAQTLGAFLGAGIIFG). Topologically, residues 122-159 (LYYDAIWAFANNQLIVSGPNGTAGIFATYPSGHLDMVN) are extracellular. Residue asparagine 141 is glycosylated (N-linked (GlcNAc...) asparagine). Residues 160–177 (GFFDQFIGTASLIVCVLA) form a helical membrane-spanning segment. At 178 to 189 (IVDPNNNPVPRG) the chain is on the cytoplasmic side. Residues 190 to 206 (LEAFTVGLVVLVIGTSM) traverse the membrane as a helical segment. Over 207-210 (GFNS) the chain is Extracellular. The discontinuously helical intramembrane region spans 211-224 (GYAVNPARDFGPRL). The NPA 2 signature appears at 215 to 217 (NPA). Residues 225 to 242 (FTAIAGWGSEVFTTGRHW) are Extracellular-facing. Residues 243–264 (WWVPIASPLLGSIAGVFVYQLM) traverse the membrane as a helical segment. At 265-290 (IGCHLEPPPPSTDEENVKLSQVKHKE) the chain is on the cytoplasmic side.

This sequence belongs to the MIP/aquaporin (TC 1.A.8) family. Homotetramer; each monomer provides an independent glycerol/water pore. Could also exist in other oligomeric states. Highly expressed in stomach and spleen, with lower expression in kidney and lung.

Its subcellular location is the cell membrane. It is found in the basolateral cell membrane. It carries out the reaction glycerol(in) = glycerol(out). The enzyme catalyses H2O(in) = H2O(out). The catalysed reaction is urea(in) = urea(out). It catalyses the reaction H2O2(out) = H2O2(in). Functionally, aquaglyceroporins form homotetrameric transmembrane channels, with each monomer independently mediating glycerol and water transport across the plasma membrane along their osmotic gradient. Could also be permeable to urea. Also participates in cell permeability to H2O2 and H2O2-mediated signaling. In skin, transports glycerol to the epidermis and stratum corneum, where it maintains hydration, elasticity, and supports lipid biosynthesis for barrier repair. In kidney, contributes to the reabsorption of water, helping the body maintain proper fluid balance. This Sus scrofa (Pig) protein is Aquaporin-3.